The primary structure comprises 76 residues: Exodeoxyribonuclease 7 small subunit (76 aa).

It belongs to the XseB family. In terms of assembly, heterooligomer composed of large and small subunits.

It is found in the cytoplasm. The catalysed reaction is Exonucleolytic cleavage in either 5'- to 3'- or 3'- to 5'-direction to yield nucleoside 5'-phosphates.. In terms of biological role, bidirectionally degrades single-stranded DNA into large acid-insoluble oligonucleotides, which are then degraded further into small acid-soluble oligonucleotides. The sequence is that of Exodeoxyribonuclease 7 small subunit from Bacillus mycoides (strain KBAB4) (Bacillus weihenstephanensis).